The following is a 300-amino-acid chain: 4-hydroxy-tetrahydrodipicolinate synthase (300 aa).

T45 is a binding site for pyruvate. The active-site Proton donor/acceptor is the Y140. K169 acts as the Schiff-base intermediate with substrate in catalysis. I210 is a binding site for pyruvate.

The protein belongs to the DapA family. Homotetramer; dimer of dimers.

It is found in the cytoplasm. The enzyme catalyses L-aspartate 4-semialdehyde + pyruvate = (2S,4S)-4-hydroxy-2,3,4,5-tetrahydrodipicolinate + H2O + H(+). It participates in amino-acid biosynthesis; L-lysine biosynthesis via DAP pathway; (S)-tetrahydrodipicolinate from L-aspartate: step 3/4. Its function is as follows. Catalyzes the condensation of (S)-aspartate-beta-semialdehyde [(S)-ASA] and pyruvate to 4-hydroxy-tetrahydrodipicolinate (HTPA). In Helicobacter pylori (strain Shi470), this protein is 4-hydroxy-tetrahydrodipicolinate synthase.